The following is a 1158-amino-acid chain: Rho1 guanine nucleotide exchange factor 2 (1158 aa).

The tract at residues 42-141 (RSSGSITHSP…SFSVSDVSNG (100 aa)) is disordered. The span at 45–63 (GSITHSPTALSSTTSLNEN) shows a compositional bias: polar residues. Residues 68–81 (FRPASSLSFSPSSL) show a composition bias toward low complexity. Positions 97–108 (KNNFYRRSSSTD) are enriched in polar residues. A compositionally biased stretch (low complexity) spans 132–141 (SFSVSDVSNG). One can recognise a DH domain in the interval 447–634 (KRQEIIFEVI…REFLTKLNYE (188 aa)). Positions 670–805 (LIFKGVVKLK…QHIEKQQDII (136 aa)) constitute a PH domain. Residues S746 and S747 each carry the phosphoserine modification. A CNH domain is found at 825–1120 (GNKLLCAVAY…KLLTDGRGLI (296 aa)).

It is found in the cytoplasm. In terms of biological role, stimulates the exchange of Rho1 and Rho5 GDP-bound form into GTP-bound form. Controls septum formation, cell wall synthesis and localization of F-actin patches. The sequence is that of Rho1 guanine nucleotide exchange factor 2 (rgf2) from Schizosaccharomyces pombe (strain 972 / ATCC 24843) (Fission yeast).